The sequence spans 118 residues: Large ribosomal subunit protein uL18 (118 aa).

The disordered stretch occupies residues Met-1–Thr-25. Positions Ile-10–Gly-20 are enriched in basic residues.

It belongs to the universal ribosomal protein uL18 family. In terms of assembly, part of the 50S ribosomal subunit; part of the 5S rRNA/L5/L18/L25 subcomplex. Contacts the 5S and 23S rRNAs.

This is one of the proteins that bind and probably mediate the attachment of the 5S RNA into the large ribosomal subunit, where it forms part of the central protuberance. The chain is Large ribosomal subunit protein uL18 from Streptococcus pyogenes serotype M5 (strain Manfredo).